A 541-amino-acid chain; its full sequence is Chaperonin GroEL 2 (541 aa).

Residues Thr-29–Pro-32, Asp-86–Thr-90, Gly-413, Asn-476–Ala-478, and Asp-492 each bind ATP.

Belongs to the chaperonin (HSP60) family. Forms a cylinder of 14 subunits composed of two heptameric rings stacked back-to-back. Interacts with the co-chaperonin GroES.

The protein localises to the secreted. It is found in the capsule. The protein resides in the cell surface. It localises to the cell wall. The catalysed reaction is ATP + H2O + a folded polypeptide = ADP + phosphate + an unfolded polypeptide.. Functionally, together with its co-chaperonin GroES, plays an essential role in assisting protein folding. The GroEL-GroES system forms a nano-cage that allows encapsulation of the non-native substrate proteins and provides a physical environment optimized to promote and accelerate protein folding. This is Chaperonin GroEL 2 from Mycolicibacterium gilvum (strain PYR-GCK) (Mycobacterium gilvum (strain PYR-GCK)).